The chain runs to 193 residues: NADH-quinone oxidoreductase subunit B (193 aa).

Cys-49, Cys-50, Cys-115, and Cys-144 together coordinate [4Fe-4S] cluster. The segment at Phe-172 to Glu-193 is disordered.

The protein belongs to the complex I 20 kDa subunit family. In terms of assembly, NDH-1 is composed of 14 different subunits. Subunits NuoB, C, D, E, F, and G constitute the peripheral sector of the complex. [4Fe-4S] cluster serves as cofactor.

The protein localises to the cell inner membrane. The catalysed reaction is a quinone + NADH + 5 H(+)(in) = a quinol + NAD(+) + 4 H(+)(out). NDH-1 shuttles electrons from NADH, via FMN and iron-sulfur (Fe-S) centers, to quinones in the respiratory chain. The immediate electron acceptor for the enzyme in this species is believed to be ubiquinone. Couples the redox reaction to proton translocation (for every two electrons transferred, four hydrogen ions are translocated across the cytoplasmic membrane), and thus conserves the redox energy in a proton gradient. In Akkermansia muciniphila (strain ATCC BAA-835 / DSM 22959 / JCM 33894 / BCRC 81048 / CCUG 64013 / CIP 107961 / Muc), this protein is NADH-quinone oxidoreductase subunit B.